We begin with the raw amino-acid sequence, 96 residues long: Aspartyl/glutamyl-tRNA(Asn/Gln) amidotransferase subunit C (96 aa).

The protein belongs to the GatC family. In terms of assembly, heterotrimer of A, B and C subunits.

It carries out the reaction L-glutamyl-tRNA(Gln) + L-glutamine + ATP + H2O = L-glutaminyl-tRNA(Gln) + L-glutamate + ADP + phosphate + H(+). The enzyme catalyses L-aspartyl-tRNA(Asn) + L-glutamine + ATP + H2O = L-asparaginyl-tRNA(Asn) + L-glutamate + ADP + phosphate + 2 H(+). Allows the formation of correctly charged Asn-tRNA(Asn) or Gln-tRNA(Gln) through the transamidation of misacylated Asp-tRNA(Asn) or Glu-tRNA(Gln) in organisms which lack either or both of asparaginyl-tRNA or glutaminyl-tRNA synthetases. The reaction takes place in the presence of glutamine and ATP through an activated phospho-Asp-tRNA(Asn) or phospho-Glu-tRNA(Gln). The protein is Aspartyl/glutamyl-tRNA(Asn/Gln) amidotransferase subunit C of Deinococcus deserti (strain DSM 17065 / CIP 109153 / LMG 22923 / VCD115).